We begin with the raw amino-acid sequence, 562 residues long: Protein wntless (562 aa).

Topologically, residues 1-15 are cytoplasmic; the sequence is MSGTILENLSGRKLS. A helical membrane pass occupies residues 16-36; that stretch reads ILVSSLMLCQVVCFLMGGLFA. The Lumenal segment spans residues 37–239; it reads PVPAGHQTVL…AIHQNGGFTQ (203 aa). Residues Asn58 and Asn103 are each glycosylated (N-linked (GlcNAc...) asparagine). Residues 240-260 form a helical membrane-spanning segment; that stretch reads VWLVLKTLLFPFVIGIMMWFW. Topologically, residues 261-275 are cytoplasmic; that stretch reads RRVHILQRSPALLEY. A helical membrane pass occupies residues 276 to 296; that stretch reads MLFYLGGALSFLNLPLELLTL. Over 297–311 the chain is Lumenal; sequence GVEMPYMLLLSDVRQ. The helical transmembrane segment at 312-332 threads the bilayer; it reads GIFYAMLLSFWLVFAGEHMLI. Over 333–344 the chain is Cytoplasmic; the sequence is QDSPSKSTIRSR. A helical membrane pass occupies residues 345-365; sequence YWKHLSAVVVGCISLFVFDIC. Topologically, residues 366–390 are lumenal; sequence ERGVQMRNPFYSIWTTPLGAKVAMS. A helical membrane pass occupies residues 391–411; the sequence is FIVLAGVSAAIYFLFLCFMVW. Over 412–441 the chain is Cytoplasmic; that stretch reads KVFKDIGDKRTSLPSMSQARRLHYEGLIYR. Residues 442–462 form a helical membrane-spanning segment; that stretch reads FKFLMLATLLCAGLTVAGFIM. At 463–482 the chain is on the lumenal side; sequence GQMAEGHWKWNENIEIQLTS. A helical transmembrane segment spans residues 483–503; it reads AFLTGVYGMWNIYIFALIILY. The Cytoplasmic portion of the chain corresponds to 504 to 562; it reads APSHKQWPTMRHSDETTQSNENIVASAASEEIEFSNLPSDSNPSEISSLTSFTRKVAFD.

This sequence belongs to the wntless family. Interacts with wg; in the Golgi. Interacts with Vps35, a component of the retromer complex; wls stability is regulated by Vps35.

It localises to the presynaptic cell membrane. The protein localises to the postsynaptic cell membrane. Its subcellular location is the cell membrane. It is found in the endoplasmic reticulum membrane. The protein resides in the endosome membrane. It localises to the golgi apparatus membrane. A segment polarity gene required for wingless (wg)-dependent patterning processes, acting in both wg-sending cells and wg-target cells. In non-neuronal cells wls directs wg secretion. The wls traffic loop encompasses the Golgi, the cell surface, an endocytic compartment and a retrograde route leading back to the Golgi, and involves clathrin-mediated endocytosis and the retromer complex (a conserved protein complex consisting of Vps35 and Vps26). In neuronal cells (the larval motorneuron NMJ), the wg signal moves across the synapse via the release of wls-containing exosome-like vesicles. Postsynaptic wls is required for the trafficking of fz2 through the fz2-interacting protein Grip. This chain is Protein wntless, found in Drosophila grimshawi (Hawaiian fruit fly).